The primary structure comprises 434 residues: Glutamyl-tRNA reductase 2 (434 aa).

Residues 57–60 (TCNR), S113, 118–120 (DFE), and Q124 each bind substrate. C58 acts as the Nucleophile in catalysis. An NADP(+)-binding site is contributed by 193–198 (GTGKIG).

This sequence belongs to the glutamyl-tRNA reductase family. In terms of assembly, homodimer.

The catalysed reaction is (S)-4-amino-5-oxopentanoate + tRNA(Glu) + NADP(+) = L-glutamyl-tRNA(Glu) + NADPH + H(+). It functions in the pathway porphyrin-containing compound metabolism; protoporphyrin-IX biosynthesis; 5-aminolevulinate from L-glutamyl-tRNA(Glu): step 1/2. Its function is as follows. Catalyzes the NADPH-dependent reduction of glutamyl-tRNA(Glu) to glutamate 1-semialdehyde (GSA). In Flavobacterium johnsoniae (strain ATCC 17061 / DSM 2064 / JCM 8514 / BCRC 14874 / CCUG 350202 / NBRC 14942 / NCIMB 11054 / UW101) (Cytophaga johnsonae), this protein is Glutamyl-tRNA reductase 2.